Consider the following 957-residue polypeptide: Retinoblastoma-related protein 1 (957 aa).

Residues 369 to 569 (TPVSTAMTTA…EKGSSMYNSL (201 aa)) are domain A. A pocket region spans residues 369–808 (TPVSTAMTTA…NEVFIPTVKP (440 aa)). Residues 570–677 (IVARPTLSAE…PAAGGETCAE (108 aa)) are spacer. Residues 678–808 (TGIGVFLSKI…NEVFIPTVKP (131 aa)) are domain B. Residues 814 to 854 (GPGTSPNRNNEPKSGGDAASFPESPRLSRFPNLPDMSPKKV) form a disordered region.

This sequence belongs to the retinoblastoma protein (RB) family.

The protein resides in the nucleus. In terms of biological role, regulator of biological processes that recruits a histone deacetylase to control gene transcription. May play a role in the entry into mitosis, negatively regulating the cell proliferation. Formation of stable complexes with geminiviridae replication-associated proteins may create a cellular environment which favors viral DNA replication. The polypeptide is Retinoblastoma-related protein 1 (RBR1) (Triticum aestivum (Wheat)).